The sequence spans 444 residues: Transcriptional regulatory protein GlrR (444 aa).

Positions 7 to 121 (HLLLVDDDPG…ALYQAIDDAL (115 aa)) constitute a Response regulatory domain. Position 56 is a 4-aspartylphosphate (D56). One can recognise a Sigma-54 factor interaction domain in the interval 136-366 (IVTRSPLMLR…VNVIEQCVAL (231 aa)). ATP is bound by residues 164-171 (GQSGTGKE) and 227-236 (AEGGTLFLDE). A DNA-binding region (H-T-H motif) is located at residues 414–433 (VTHAARMAGRNRTEFYKLLS).

Post-translationally, phosphorylated by GlrK.

It is found in the cytoplasm. Functionally, member of the two-component regulatory system GlrR/GlrK that up-regulates transcription of the glmY sRNA when cells enter the stationary growth phase. Regulates glmY transcription by binding to three conserved sites in the purL-glmY intergenic region. In Escherichia coli (strain K12), this protein is Transcriptional regulatory protein GlrR (glrR).